The chain runs to 341 residues: Phosphate acyltransferase (341 aa).

Belongs to the PlsX family. As to quaternary structure, homodimer. Probably interacts with PlsY.

The protein localises to the cytoplasm. It catalyses the reaction a fatty acyl-[ACP] + phosphate = an acyl phosphate + holo-[ACP]. It participates in lipid metabolism; phospholipid metabolism. Functionally, catalyzes the reversible formation of acyl-phosphate (acyl-PO(4)) from acyl-[acyl-carrier-protein] (acyl-ACP). This enzyme utilizes acyl-ACP as fatty acyl donor, but not acyl-CoA. This Vibrio atlanticus (strain LGP32) (Vibrio splendidus (strain Mel32)) protein is Phosphate acyltransferase.